The primary structure comprises 206 residues: Histidine biosynthesis bifunctional protein HisIE (206 aa).

The segment at 1–114 (MLKKINFIDI…FQVPSENLFF (114 aa)) is phosphoribosyl-AMP cyclohydrolase. The tract at residues 115–206 (LHDLDCMLKF…NLKMRSNKQV (92 aa)) is phosphoribosyl-ATP pyrophosphohydrolase.

In the N-terminal section; belongs to the PRA-CH family. This sequence in the C-terminal section; belongs to the PRA-PH family.

The protein localises to the cytoplasm. The enzyme catalyses 1-(5-phospho-beta-D-ribosyl)-ATP + H2O = 1-(5-phospho-beta-D-ribosyl)-5'-AMP + diphosphate + H(+). It carries out the reaction 1-(5-phospho-beta-D-ribosyl)-5'-AMP + H2O = 1-(5-phospho-beta-D-ribosyl)-5-[(5-phospho-beta-D-ribosylamino)methylideneamino]imidazole-4-carboxamide. Its pathway is amino-acid biosynthesis; L-histidine biosynthesis; L-histidine from 5-phospho-alpha-D-ribose 1-diphosphate: step 2/9. The protein operates within amino-acid biosynthesis; L-histidine biosynthesis; L-histidine from 5-phospho-alpha-D-ribose 1-diphosphate: step 3/9. This Buchnera aphidicola subsp. Baizongia pistaciae (strain Bp) protein is Histidine biosynthesis bifunctional protein HisIE (hisI).